The following is a 343-amino-acid chain: ATP phosphoribosyltransferase regulatory subunit (343 aa).

Residues 324-343 are disordered; it reads RANGRAKRPARPRRSPPRPR. A compositionally biased stretch (basic residues) spans 327–343; that stretch reads GRAKRPARPRRSPPRPR.

It belongs to the class-II aminoacyl-tRNA synthetase family. HisZ subfamily. Heteromultimer composed of HisG and HisZ subunits.

It is found in the cytoplasm. Its pathway is amino-acid biosynthesis; L-histidine biosynthesis; L-histidine from 5-phospho-alpha-D-ribose 1-diphosphate: step 1/9. In terms of biological role, required for the first step of histidine biosynthesis. May allow the feedback regulation of ATP phosphoribosyltransferase activity by histidine. This Anaeromyxobacter sp. (strain Fw109-5) protein is ATP phosphoribosyltransferase regulatory subunit.